Consider the following 85-residue polypeptide: Small ribosomal subunit protein bS18 (85 aa).

It belongs to the bacterial ribosomal protein bS18 family. In terms of assembly, part of the 30S ribosomal subunit. Forms a tight heterodimer with protein bS6.

In terms of biological role, binds as a heterodimer with protein bS6 to the central domain of the 16S rRNA, where it helps stabilize the platform of the 30S subunit. In Hyphomonas neptunium (strain ATCC 15444), this protein is Small ribosomal subunit protein bS18.